Here is a 403-residue protein sequence, read N- to C-terminus: F-box protein At2g40925 (403 aa).

Residues 21-71 (NRHDCEIPPDLMIEILIRLPTKSFMRFKCVSKQWSPLISGRYFCNRLFTCV) form the F-box domain.

The sequence is that of F-box protein At2g40925 from Arabidopsis thaliana (Mouse-ear cress).